Consider the following 78-residue polypeptide: Small ribosomal subunit protein uS17 (78 aa).

This sequence belongs to the universal ribosomal protein uS17 family. As to quaternary structure, part of the 30S ribosomal subunit.

One of the primary rRNA binding proteins, it binds specifically to the 5'-end of 16S ribosomal RNA. The sequence is that of Small ribosomal subunit protein uS17 from Wolbachia pipientis wMel.